The following is a 119-amino-acid chain: Ribonuclease P protein component (119 aa).

This sequence belongs to the RnpA family. Consists of a catalytic RNA component (M1 or rnpB) and a protein subunit.

It catalyses the reaction Endonucleolytic cleavage of RNA, removing 5'-extranucleotides from tRNA precursor.. RNaseP catalyzes the removal of the 5'-leader sequence from pre-tRNA to produce the mature 5'-terminus. It can also cleave other RNA substrates such as 4.5S RNA. The protein component plays an auxiliary but essential role in vivo by binding to the 5'-leader sequence and broadening the substrate specificity of the ribozyme. This chain is Ribonuclease P protein component, found in Listeria monocytogenes serotype 4a (strain HCC23).